The primary structure comprises 516 residues: RNA-binding region-containing protein 3 (516 aa).

Disordered regions lie at residues 1–27 (MAAP…RGDR), 106–130 (VHSP…DDKE), 210–254 (EDYM…DEDR), and 264–283 (ANLQ…RKKR). Ser-21 is subject to Phosphoserine. Residues 27–102 (RTLLVRHLPA…HTLVVEFAKE (76 aa)) enclose the RRM 1 domain. Phosphoserine is present on Ser-108. Residues 115-130 (TEKKKRSDDPVEDDKE) are compositionally biased toward basic and acidic residues. The segment covering 217 to 230 (APLPPTSPQPPEEP) has biased composition (pro residues). The span at 269 to 283 (KRPKPIKQRHVRKKR) shows a compositional bias: basic residues. The 84-residue stretch at 419–502 (CRIYVKNLAK…KPMVVQFARS (84 aa)) folds into the RRM 2 domain.

As to quaternary structure, component of the U11/U12 snRNPs that are part of the U12-type spliceosome. Found in a complex with m(7)G-capped U12 snRNA. Interacts with PDCD7.

The protein resides in the nucleus. Its function is as follows. Participates in pre-mRNA U12-dependent splicing, performed by the minor spliceosome which removes U12-type introns. U12-type introns comprises less than 1% of all non-coding sequences. Binds to the 3'-stem-loop of m(7)G-capped U12 snRNA. This Bos taurus (Bovine) protein is RNA-binding region-containing protein 3 (RNPC3).